The chain runs to 1606 residues: Fatty acid synthase apf5 (1606 aa).

Residues 142–218 (VPVSAILISL…ETLSTSHDGQ (77 aa)) enclose the Carrier domain. Ser-177 is subject to O-(pantetheine 4'-phosphoryl)serine. Positions 996 to 1539 (KESLIEVALQ…QKGGQALLVH (544 aa)) constitute a Ketosynthase family 3 (KS3) domain. Active-site for beta-ketoacyl synthase activity residues include Cys-1182, His-1424, and His-1465.

The protein belongs to the thiolase-like superfamily. Fungal fatty acid synthetase subunit alpha family.

It carries out the reaction a fatty acyl-[ACP] + malonyl-[ACP] + H(+) = a 3-oxoacyl-[ACP] + holo-[ACP] + CO2. It participates in secondary metabolite biosynthesis. Functionally, fatty acid synthase; part of the gene cluster that mediates the biosynthesis of the cyclic tetrapeptide apicidin F (APF). The non-ribosomal peptide synthetase apf1 incorporates four different amino acids to produce apicidin F: L-phenylalanine, D-pipecolic acid (D-pip), N-methoxy-L-tryptophan and L-2-aminooctanedioic acid. L-Phenylalanine is the only proteinogenic amino acid directly used by apf1. The 3 other apf1 substrates are non-proteinogenic and have to be modified by other enzymes of the cluster. Lysine is converted to delta-1-pyrroline-5-carboxylate (P5C) which is reduced to L-pipecolic acid (L-pip) by apf3. L-pip is epimerized to D-pip, probably by apf1 activity, prior to incorporation. L-Tryptophan is N-oxidyzed by one of the cytochrome P450 monooxygenases (apf7 or apf8), and further methylated at the hydroxy group by the O-methyltransferase apf6 to yield N-methoxy-L-tryptophan. The synthesis of the fourth apf1 substrate is more complex. The fatty acid synthase apf5 is involved in the synthesis of the octanoic acid backbone of L-2-aminooctanedioic acid by fixing one acetyl-CoA unit and three malonyl-CoA units. Then one of the cytochrome P450 monooxygenases (apf7 or apf8) may oxidize this backbone to 2-oxooctanoic acid. The aminotransferase apf4 is predicted to catalyze the exchange of the keto group with an amino group. The next step would be the oxidation of 2-aminooctanoic acid by one of the cytochrome P450 monooxygenases (apf7 or apf8). The last step is the oxidation of 2-amino-8-hydroxyoctanoic acid to 2-aminooctanedioic acid is catalyzed by the FAD-dependent monooxygenase apf9. This chain is Fatty acid synthase apf5, found in Gibberella fujikuroi (strain CBS 195.34 / IMI 58289 / NRRL A-6831) (Bakanae and foot rot disease fungus).